The chain runs to 333 residues: Flotillin-like protein FloA (333 aa).

A helical membrane pass occupies residues 9-29 (IVLIVGGIIFLILFFHYVPFF).

Belongs to the flotillin-like FloA family. As to quaternary structure, homooligomerizes.

Its subcellular location is the cell membrane. The protein resides in the membrane raft. Functionally, found in functional membrane microdomains (FMM) that may be equivalent to eukaryotic membrane rafts. FMMs are highly dynamic and increase in number as cells age. Flotillins are thought to be important factors in membrane fluidity. The chain is Flotillin-like protein FloA from Bacteroides thetaiotaomicron (strain ATCC 29148 / DSM 2079 / JCM 5827 / CCUG 10774 / NCTC 10582 / VPI-5482 / E50).